A 469-amino-acid polypeptide reads, in one-letter code: Secreted triacylglycerol lipase LIP3 (469 aa).

The N-terminal stretch at 1-21 (MVSLLWKFTLLCLFLLACTSA) is a signal peptide. Residues Cys121 and Cys292 are joined by a disulfide bond. Ser205 acts as the Nucleophile in catalysis. Residue Asn238 is glycosylated (N-linked (GlcNAc...) asparagine). Residues Asp352 and His386 contribute to the active site.

Belongs to the AB hydrolase superfamily. Lipase family. Class Lip subfamily.

Its subcellular location is the secreted. It carries out the reaction a triacylglycerol + H2O = a diacylglycerol + a fatty acid + H(+). The catalysed reaction is a monoacylglycerol + H2O = glycerol + a fatty acid + H(+). The enzyme catalyses a diacylglycerol + H2O = a monoacylglycerol + a fatty acid + H(+). In terms of biological role, secreted lipase that hydrolyzes acylglycerol lipids such as triacylglycerols and consequently releases free fatty acid. Generates free oleic acid from the substrates mono- and diolein and hydrolyzes triolein in significant amounts. Due to an absence of fatty acid synthase genes in Malassezia species, secretory lipases are essential for the yeast to generate free fatty acids from degradation of sebum and assimilate them as lipid sources for growth. Plays an essential role at the pathogen-host interface during disease progression. Performs also the reverse reaction to build diacyl- and triacyl- glycerols from monoacylglycerols. The chain is Secreted triacylglycerol lipase LIP3 from Malassezia restricta (strain ATCC 96810 / NBRC 103918 / CBS 7877) (Seborrheic dermatitis infection agent).